We begin with the raw amino-acid sequence, 149 residues long: Large ribosomal subunit protein bL9 (149 aa).

The protein belongs to the bacterial ribosomal protein bL9 family.

Its function is as follows. Binds to the 23S rRNA. The sequence is that of Large ribosomal subunit protein bL9 from Citrobacter koseri (strain ATCC BAA-895 / CDC 4225-83 / SGSC4696).